Consider the following 386-residue polypeptide: Queuine tRNA-ribosyltransferase (386 aa).

Asp99 functions as the Proton acceptor in the catalytic mechanism. Substrate contacts are provided by residues 99 to 103 (DSGGF), Asp153, Gln198, and Gly225. The RNA binding stretch occupies residues 256–262 (GVGKPED). Asp275 acts as the Nucleophile in catalysis. The segment at 280–284 (TRNAR) is RNA binding; important for wobble base 34 recognition. Residues Cys313, Cys315, Cys318, and His344 each coordinate Zn(2+).

It belongs to the queuine tRNA-ribosyltransferase family. Homodimer. Within each dimer, one monomer is responsible for RNA recognition and catalysis, while the other monomer binds to the replacement base PreQ1. Requires Zn(2+) as cofactor.

The catalysed reaction is 7-aminomethyl-7-carbaguanine + guanosine(34) in tRNA = 7-aminomethyl-7-carbaguanosine(34) in tRNA + guanine. Its pathway is tRNA modification; tRNA-queuosine biosynthesis. In terms of biological role, catalyzes the base-exchange of a guanine (G) residue with the queuine precursor 7-aminomethyl-7-deazaguanine (PreQ1) at position 34 (anticodon wobble position) in tRNAs with GU(N) anticodons (tRNA-Asp, -Asn, -His and -Tyr). Catalysis occurs through a double-displacement mechanism. The nucleophile active site attacks the C1' of nucleotide 34 to detach the guanine base from the RNA, forming a covalent enzyme-RNA intermediate. The proton acceptor active site deprotonates the incoming PreQ1, allowing a nucleophilic attack on the C1' of the ribose to form the product. After dissociation, two additional enzymatic reactions on the tRNA convert PreQ1 to queuine (Q), resulting in the hypermodified nucleoside queuosine (7-(((4,5-cis-dihydroxy-2-cyclopenten-1-yl)amino)methyl)-7-deazaguanosine). The chain is Queuine tRNA-ribosyltransferase from Acinetobacter baylyi (strain ATCC 33305 / BD413 / ADP1).